The sequence spans 84 residues: Small ribosomal subunit protein bS16 (84 aa).

It belongs to the bacterial ribosomal protein bS16 family.

The polypeptide is Small ribosomal subunit protein bS16 (Dichelobacter nodosus (strain VCS1703A)).